Reading from the N-terminus, the 569-residue chain is Carotenoid cleavage dioxygenase 8 homolog B, chloroplastic (569 aa).

A chloroplast-targeting transit peptide spans 1 to 43; sequence MSPAMLQASSLCVSAALSGAASRPGRLASQGHQGKRAVAQPLA. Positions 23–81 are disordered; it reads RPGRLASQGHQGKRAVAQPLAASAVTEAAPPAPVVAPPARPVDAPRRRGGRGGGGGGGE. The segment covering 52–62 has biased composition (pro residues); that stretch reads PPAPVVAPPAR. Positions 251, 301, 368, and 558 each coordinate Fe cation.

The protein belongs to the carotenoid oxygenase family. Fe(2+) is required as a cofactor. As to expression, expressed in parenchyma cells of the root stele, shoot apex, leaf buds, xylem parenchyma cells of the stem, inflorescences and panicles.

The protein resides in the plastid. It is found in the chloroplast. The catalysed reaction is 9-cis-10'-apo-beta-carotenal + 2 O2 = (2E,4E,6E)-7-hydroxy-4-methylhepta-2,4,6-trienal + (11R)-carlactone. It carries out the reaction all-trans-10'-apo-beta-carotenal + O2 = (2E,4E,6E)-4-methylocta-2,4,6-trienedial + 13-apo-beta-carotenone. Functionally, involved in strigolactones biosynthesis by cleaving the C(27) 9-cis-10'-apo-beta-carotenal produced by CCD7. Produces the C(19) carlactone and a C(8) hydroxyaldehyde. Also shows lower activity with all-trans-10'-apo-beta-carotenal producing a C(9) dialdehyde and the C(18) 13-apo-beta-carotenone. Strigolactones are hormones that inhibit tillering and shoot branching through the MAX-dependent pathway, contribute to the regulation of shoot architectural response to phosphate-limiting conditions and function as rhizosphere signal that stimulates hyphal branching of arbuscular mycorrhizal fungi and trigger seed germination of root parasitic weeds. In Oryza sativa subsp. japonica (Rice), this protein is Carotenoid cleavage dioxygenase 8 homolog B, chloroplastic (CCD8B).